The primary structure comprises 522 residues: N-acetylgalactosamine-6-sulfatase (522 aa).

Residues Met-1–Gly-25 form the signal peptide. The interval Pro-27–Glu-379 is catalytic domain. Asp-38, Asp-39, and Cys-78 together coordinate Ca(2+). Residue Cys-78 is the Nucleophile of the active site. Residue Cys-78 is modified to 3-oxoalanine (Cys). His-141 is an active-site residue. Asn-203 is a glycosylation site (N-linked (GlcNAc...) asparagine). Ca(2+) is bound by residues Asp-288 and Asn-289. Cysteines 308 and 419 form a disulfide. Residue Asn-423 is glycosylated (N-linked (GlcNAc...) asparagine). Cystine bridges form between Cys-489/Cys-518 and Cys-501/Cys-507.

This sequence belongs to the sulfatase family. Homodimer. The cofactor is Ca(2+). Post-translationally, the conversion to 3-oxoalanine (also known as C-formylglycine, FGly), of a serine or cysteine residue in prokaryotes and of a cysteine residue in eukaryotes, is critical for catalytic activity.

It localises to the lysosome. The enzyme catalyses Hydrolysis of the 6-sulfate groups of the N-acetyl-D-galactosamine 6-sulfate units of chondroitin sulfate and of the D-galactose 6-sulfate units of keratan sulfate.. The protein is N-acetylgalactosamine-6-sulfatase (GALNS) of Sus scrofa (Pig).